The following is a 443-amino-acid chain: Thymidine phosphorylase (443 aa).

Belongs to the thymidine/pyrimidine-nucleoside phosphorylase family. In terms of assembly, homodimer.

It carries out the reaction thymidine + phosphate = 2-deoxy-alpha-D-ribose 1-phosphate + thymine. Its pathway is pyrimidine metabolism; dTMP biosynthesis via salvage pathway; dTMP from thymine: step 1/2. Functionally, the enzymes which catalyze the reversible phosphorolysis of pyrimidine nucleosides are involved in the degradation of these compounds and in their utilization as carbon and energy sources, or in the rescue of pyrimidine bases for nucleotide synthesis. This is Thymidine phosphorylase from Shewanella frigidimarina (strain NCIMB 400).